The chain runs to 119 residues: Fluoride-specific ion channel FluC 2 (119 aa).

The chain crosses the membrane as a helical span at residues 46–66 (FALGLLTFAGVTGDAALLVGV). 2 residues coordinate Na(+): glycine 70 and threonine 73. A helical transmembrane segment spans residues 96–116 (LNAVGNLACALVGIGLAWGIV).

This sequence belongs to the fluoride channel Fluc/FEX (TC 1.A.43) family.

The protein localises to the cell membrane. It catalyses the reaction fluoride(in) = fluoride(out). Na(+) is not transported, but it plays an essential structural role and its presence is essential for fluoride channel function. Functionally, fluoride-specific ion channel. Important for reducing fluoride concentration in the cell, thus reducing its toxicity. This chain is Fluoride-specific ion channel FluC 2, found in Haloarcula marismortui (strain ATCC 43049 / DSM 3752 / JCM 8966 / VKM B-1809) (Halobacterium marismortui).